The primary structure comprises 95 residues: Co-chaperonin GroES (95 aa).

It belongs to the GroES chaperonin family. As to quaternary structure, heptamer of 7 subunits arranged in a ring. Interacts with the chaperonin GroEL.

The protein localises to the cytoplasm. Functionally, together with the chaperonin GroEL, plays an essential role in assisting protein folding. The GroEL-GroES system forms a nano-cage that allows encapsulation of the non-native substrate proteins and provides a physical environment optimized to promote and accelerate protein folding. GroES binds to the apical surface of the GroEL ring, thereby capping the opening of the GroEL channel. The sequence is that of Co-chaperonin GroES from Rickettsia akari (strain Hartford).